Reading from the N-terminus, the 154-residue chain is Ribonuclease H (154 aa).

Residues 1 to 141 (MKRIEAYTDG…ADELAREGME (141 aa)) enclose the RNase H type-1 domain. The Mg(2+) site is built by Asp9, Glu47, Asp69, and Asp133.

The protein belongs to the RNase H family. As to quaternary structure, monomer. It depends on Mg(2+) as a cofactor.

The protein localises to the cytoplasm. It carries out the reaction Endonucleolytic cleavage to 5'-phosphomonoester.. Its function is as follows. Endonuclease that specifically degrades the RNA of RNA-DNA hybrids. The sequence is that of Ribonuclease H from Brucella anthropi (strain ATCC 49188 / DSM 6882 / CCUG 24695 / JCM 21032 / LMG 3331 / NBRC 15819 / NCTC 12168 / Alc 37) (Ochrobactrum anthropi).